The chain runs to 356 residues: UDP-N-acetylglucosamine--N-acetylmuramyl-(pentapeptide) pyrophosphoryl-undecaprenol N-acetylglucosamine transferase (356 aa).

UDP-N-acetyl-alpha-D-glucosamine-binding positions include 10-12 (TAG), N123, R159, S193, I240, and Q284.

Belongs to the glycosyltransferase 28 family. MurG subfamily.

The protein resides in the cell membrane. It catalyses the reaction di-trans,octa-cis-undecaprenyl diphospho-N-acetyl-alpha-D-muramoyl-L-alanyl-D-glutamyl-meso-2,6-diaminopimeloyl-D-alanyl-D-alanine + UDP-N-acetyl-alpha-D-glucosamine = di-trans,octa-cis-undecaprenyl diphospho-[N-acetyl-alpha-D-glucosaminyl-(1-&gt;4)]-N-acetyl-alpha-D-muramoyl-L-alanyl-D-glutamyl-meso-2,6-diaminopimeloyl-D-alanyl-D-alanine + UDP + H(+). It functions in the pathway cell wall biogenesis; peptidoglycan biosynthesis. In terms of biological role, cell wall formation. Catalyzes the transfer of a GlcNAc subunit on undecaprenyl-pyrophosphoryl-MurNAc-pentapeptide (lipid intermediate I) to form undecaprenyl-pyrophosphoryl-MurNAc-(pentapeptide)GlcNAc (lipid intermediate II). This chain is UDP-N-acetylglucosamine--N-acetylmuramyl-(pentapeptide) pyrophosphoryl-undecaprenol N-acetylglucosamine transferase, found in Corynebacterium glutamicum (strain R).